The following is a 162-amino-acid chain: UPF0763 protein Sdel_0383 (162 aa).

This sequence belongs to the UPF0763 family.

The sequence is that of UPF0763 protein Sdel_0383 from Sulfurospirillum deleyianum (strain ATCC 51133 / DSM 6946 / 5175).